The chain runs to 495 residues: Bifunctional protein GlmU (495 aa).

Residues 1–241 (MTFPGDTAVL…SALVAGVNNR (241 aa)) form a pyrophosphorylase region. Residues 12 to 15 (LAAG), Lys-26, Gln-83, 88 to 89 (GT), 112 to 114 (SGD), Gly-151, Glu-166, Asn-181, and Asn-239 contribute to the UDP-N-acetyl-alpha-D-glucosamine site. Asp-114 serves as a coordination point for Mg(2+). Asn-239 serves as a coordination point for Mg(2+). The segment at 242–262 (VQLAELASELNRRVVAAHQLA) is linker. The interval 263 to 495 (GVTVVDPATT…TQPPDADQTP (233 aa)) is N-acetyltransferase. Residues Arg-344 and Lys-362 each contribute to the UDP-N-acetyl-alpha-D-glucosamine site. Catalysis depends on His-374, which acts as the Proton acceptor. Tyr-377 and Asn-388 together coordinate UDP-N-acetyl-alpha-D-glucosamine. Residues Ala-391, 397–398 (NY), Ser-416, and Ala-434 contribute to the acetyl-CoA site. A disordered region spans residues 457-495 (IENWVQRKRPGSPAAQASKRASEMACQQPTQPPDADQTP). Positions 483–495 (QQPTQPPDADQTP) are enriched in low complexity.

In the N-terminal section; belongs to the N-acetylglucosamine-1-phosphate uridyltransferase family. The protein in the C-terminal section; belongs to the transferase hexapeptide repeat family. As to quaternary structure, homotrimer. Mg(2+) is required as a cofactor.

It localises to the cytoplasm. It carries out the reaction alpha-D-glucosamine 1-phosphate + acetyl-CoA = N-acetyl-alpha-D-glucosamine 1-phosphate + CoA + H(+). The catalysed reaction is N-acetyl-alpha-D-glucosamine 1-phosphate + UTP + H(+) = UDP-N-acetyl-alpha-D-glucosamine + diphosphate. It functions in the pathway nucleotide-sugar biosynthesis; UDP-N-acetyl-alpha-D-glucosamine biosynthesis; N-acetyl-alpha-D-glucosamine 1-phosphate from alpha-D-glucosamine 6-phosphate (route II): step 2/2. Its pathway is nucleotide-sugar biosynthesis; UDP-N-acetyl-alpha-D-glucosamine biosynthesis; UDP-N-acetyl-alpha-D-glucosamine from N-acetyl-alpha-D-glucosamine 1-phosphate: step 1/1. It participates in bacterial outer membrane biogenesis; LPS lipid A biosynthesis. Its function is as follows. Catalyzes the last two sequential reactions in the de novo biosynthetic pathway for UDP-N-acetylglucosamine (UDP-GlcNAc). The C-terminal domain catalyzes the transfer of acetyl group from acetyl coenzyme A to glucosamine-1-phosphate (GlcN-1-P) to produce N-acetylglucosamine-1-phosphate (GlcNAc-1-P), which is converted into UDP-GlcNAc by the transfer of uridine 5-monophosphate (from uridine 5-triphosphate), a reaction catalyzed by the N-terminal domain. The protein is Bifunctional protein GlmU of Mycobacterium tuberculosis (strain ATCC 25177 / H37Ra).